Consider the following 79-residue polypeptide: Acyl carrier protein (79 aa).

One can recognise a Carrier domain in the interval 2–77; it reads STIEERVKKI…QAIDYVKVHV (76 aa). Ser-37 carries the O-(pantetheine 4'-phosphoryl)serine modification.

It belongs to the acyl carrier protein (ACP) family. 4'-phosphopantetheine is transferred from CoA to a specific serine of apo-ACP by AcpS. This modification is essential for activity because fatty acids are bound in thioester linkage to the sulfhydryl of the prosthetic group.

The protein localises to the cytoplasm. The protein operates within lipid metabolism; fatty acid biosynthesis. Carrier of the growing fatty acid chain in fatty acid biosynthesis. This is Acyl carrier protein from Xanthomonas albilineans.